The following is a 144-amino-acid chain: Transcription antitermination protein NusB (144 aa).

Belongs to the NusB family.

Involved in transcription antitermination. Required for transcription of ribosomal RNA (rRNA) genes. Binds specifically to the boxA antiterminator sequence of the ribosomal RNA (rrn) operons. The protein is Transcription antitermination protein NusB of Dictyoglomus thermophilum (strain ATCC 35947 / DSM 3960 / H-6-12).